We begin with the raw amino-acid sequence, 196 residues long: Peroxynitrite isomerase (196 aa).

Residues 1 to 29 (MSDENPLQPPWLNAPPVDPYPYEESHDLR) are disordered. The segment covering 7 to 19 (LQPPWLNAPPVDP) has biased composition (pro residues). The GXWXGXG motif lies at 46–52 (GVWRGRG). Residue His-186 coordinates heme b.

This sequence belongs to the nitrobindin family. Homodimer. Heme b is required as a cofactor.

The catalysed reaction is peroxynitrite = nitrate. The protein operates within nitrogen metabolism. Heme-binding protein able to scavenge peroxynitrite and to protect free L-tyrosine against peroxynitrite-mediated nitration, by acting as a peroxynitrite isomerase that converts peroxynitrite to nitrate. Therefore, this protein likely plays a role in peroxynitrite sensing and in the detoxification of reactive nitrogen and oxygen species (RNS and ROS, respectively). Is able to bind nitric oxide (NO) in vitro, but may act as a sensor of peroxynitrite levels in vivo. This Salinispora arenicola (strain CNS-205) protein is Peroxynitrite isomerase.